The primary structure comprises 613 residues: MSDLKRSLSEAAAAAFQAAGLSPDFGRVTASDRPDLADFQCNGALAAAKSAKRNPREIAVQVVDVLKADPRLASVEIAGVGFINMRVSTDALSIRANEIAADPRAGAEPLAHPRRVLVDYAGPNVAKPMHVGHLRASIIGESVKRLYRFRGDDVVGDAHFGDWGFQMGLLISAIMEEDAFIRALLERLVEAPREFSKADEDKVMSEFAQRVTLDDLDRLYPAASARQKEDPEFKEKARKATAELQNGRFGYRLLWRHFVNISRVALEREFHALGVDFDLWKGESDVQDLIAPMVRQLEVKGLLVDDQGARIVRVARPGETKKKKLPDGSVVEVESPDPLLVVSSEGSAMYGTTDLATILDRRKSFDPHLILYCVDQRQADHFEQVFRAAYLAGYAEPGSLEHIGFGTMNGSDGKPFKTRAGGVLKLHDLIEMAREKARERLREAGLGAELSQEAFEETAHKVGIAALKFADLQNFRGTSYVFDLDRFTSFEGKTGPYLLYQSVRIKSILRKAAEQKVVSGAIIVGEPAERDLTLLLDAFEGALSEAYDKKAPNFIAEHAYKLAQTFSKFYAACPILSADNDATRASRLALAETTLKQLELALDLLGIEAPERM.

The short motif at Pro123 to His133 is the 'HIGH' region element.

The protein belongs to the class-I aminoacyl-tRNA synthetase family. Monomer.

The protein localises to the cytoplasm. It catalyses the reaction tRNA(Arg) + L-arginine + ATP = L-arginyl-tRNA(Arg) + AMP + diphosphate. This is Arginine--tRNA ligase from Caulobacter sp. (strain K31).